The chain runs to 68 residues: Large ribosomal subunit protein uL29 (68 aa).

Belongs to the universal ribosomal protein uL29 family.

In Streptococcus pneumoniae (strain JJA), this protein is Large ribosomal subunit protein uL29.